A 322-amino-acid chain; its full sequence is MTTTAPHVPVLIDEVIAGLEPATGETHVDGTFGAGGYTRALLQAGARVYAFDRDPDAIAEGRALEDGQDGRLILVPERFSRMAEALNERGIDQVDGVTLDIGVSSMQLDRADRGFSFQADGPLDMRMEKSGMSAADFVNTADEAEIADVLHDLGEEPRARRVARAIVQARPITRTSELAEVVRRALGHKPHEKKDPATRTFQAIRIHLNAELDELEQGLAAAERVLRPGGRLAVVSFHSIEDRIVKRFLRDRSGATPAGSRHLPDARAGGPRPSFEAVAKPVRAGEAELARNPRSRSATLRVARRTAAAPWGTAPKKEGRQG.

S-adenosyl-L-methionine is bound by residues 35–37 (GGY), Asp-52, Phe-79, Asp-100, and Gln-107. The segment at 254–322 (GATPAGSRHL…TAPKKEGRQG (69 aa)) is disordered. Residues 295 to 309 (SRSATLRVARRTAAA) show a composition bias toward low complexity.

This sequence belongs to the methyltransferase superfamily. RsmH family.

The protein localises to the cytoplasm. It catalyses the reaction cytidine(1402) in 16S rRNA + S-adenosyl-L-methionine = N(4)-methylcytidine(1402) in 16S rRNA + S-adenosyl-L-homocysteine + H(+). Its function is as follows. Specifically methylates the N4 position of cytidine in position 1402 (C1402) of 16S rRNA. This Rhizorhabdus wittichii (strain DSM 6014 / CCUG 31198 / JCM 15750 / NBRC 105917 / EY 4224 / RW1) (Sphingomonas wittichii) protein is Ribosomal RNA small subunit methyltransferase H.